The following is an 824-amino-acid chain: MSSLLNFYRKVLNVPLSLLVKSRAIPTDPVKELNLNLEQPIIYVLPYTSQTDLLILQKNCLALNLPDPLQNNELNGQSLPRYVFLDEGRRFFKSKGAKSETESIFYRYLDLHRNNESLDVQLIPASVLWGRSPGKESEPHLRLMSSFQRIISMIWFGRDNFVRFSQALSLKYMVAEHGADEGIAQKLARVAKIHFAKQRYSAMGPRLPDRQAMFNKIIQSPAIKAAIEEEAKTKKISIEKARQEAEKIVNEIAADVSHESLRIADRVLSWLWNKLYQGINVQNGDRVRKLALEGHEIVYVPCHRSHMDYLLLSYLLYHQGLVPPHIAAGINLNFFPAGPIFRSWGAFFIRRTFKGNRLYSTIFREYLAELFYRGYSVEYFIEGGRSRTGRLLEPKTGMMSMTLQALQRGLTRPISIVPVYIGYEHVLEVDTYAKELRGAEKEKENAGLVLRVIKKLKNLGQCYVNFAEPIQVNNYLNQHFPEWKESQAEDSRPKWLNEAVDSVAHQVMININKAAAINAKNLIGSVLLASRQRALAREQLIEQVDSYLQLFKNVSYSDDVIVPNDSAEEMLNHVLTLPRSGVISEKDSFGEMIRLDRESAVLMTYYRNNIQHLFVLPSLVASIILHHESVSKDLIIKTVNRIYPFLKAELFLHFEENDVRNQVEAILTEFSAQRIVKYESDVLQINRARVRALQLHAAGVREILQRYYISLSILLEHPEISRAALEKESRSIAQRLSILHGINAPEFFDKALFSTFSASLKAQGYFDSEGNCILEKAKEAEEILRSLISVEVQLTIQGAMEKVEEVENTETVVKTAEAVTEKNE.

The HXXXXD motif signature appears at 302-307 (CHRSHM).

Belongs to the GPAT/DAPAT family.

It localises to the cell inner membrane. The catalysed reaction is sn-glycerol 3-phosphate + an acyl-CoA = a 1-acyl-sn-glycero-3-phosphate + CoA. It participates in phospholipid metabolism; CDP-diacylglycerol biosynthesis; CDP-diacylglycerol from sn-glycerol 3-phosphate: step 1/3. The polypeptide is Glycerol-3-phosphate acyltransferase (Actinobacillus pleuropneumoniae serotype 7 (strain AP76)).